Consider the following 162-residue polypeptide: MKLDQVARSLLLKEFVSGFVLAMKYFFKPKATINYPFEMGHRGPRFRGEHALRRYPNGEERCIACKLCEAICPAQAITIEAGPRRNDGTRRTTRYDIDMVKCIYCGMCQEACPVDAIVEGPNFEFSVETREELLYDKQKLLENGDRWEREIARNIAVDAPYR.

4Fe-4S ferredoxin-type domains lie at 52 to 82 (LRRY…IEAG) and 93 to 122 (TRYD…EGPN). Residues C62, C65, C68, C72, C102, C105, C108, and C112 each contribute to the [4Fe-4S] cluster site.

The protein belongs to the complex I 23 kDa subunit family. In terms of assembly, NDH-1 is composed of 14 different subunits. Subunits NuoA, H, J, K, L, M, N constitute the membrane sector of the complex. Requires [4Fe-4S] cluster as cofactor.

It is found in the cell inner membrane. The enzyme catalyses a quinone + NADH + 5 H(+)(in) = a quinol + NAD(+) + 4 H(+)(out). In terms of biological role, NDH-1 shuttles electrons from NADH, via FMN and iron-sulfur (Fe-S) centers, to quinones in the respiratory chain. The immediate electron acceptor for the enzyme in this species is believed to be ubiquinone. Couples the redox reaction to proton translocation (for every two electrons transferred, four hydrogen ions are translocated across the cytoplasmic membrane), and thus conserves the redox energy in a proton gradient. The protein is NADH-quinone oxidoreductase subunit I of Methylorubrum extorquens (strain PA1) (Methylobacterium extorquens).